The sequence spans 72 residues: Translation initiation factor IF-1 (72 aa).

The S1-like domain maps to 1–72; it reads MSKEDHIEME…SKARITFRHR (72 aa).

Belongs to the IF-1 family. As to quaternary structure, component of the 30S ribosomal translation pre-initiation complex which assembles on the 30S ribosome in the order IF-2 and IF-3, IF-1 and N-formylmethionyl-tRNA(fMet); mRNA recruitment can occur at any time during PIC assembly.

The protein localises to the cytoplasm. Functionally, one of the essential components for the initiation of protein synthesis. Stabilizes the binding of IF-2 and IF-3 on the 30S subunit to which N-formylmethionyl-tRNA(fMet) subsequently binds. Helps modulate mRNA selection, yielding the 30S pre-initiation complex (PIC). Upon addition of the 50S ribosomal subunit IF-1, IF-2 and IF-3 are released leaving the mature 70S translation initiation complex. The sequence is that of Translation initiation factor IF-1 from Methylococcus capsulatus (strain ATCC 33009 / NCIMB 11132 / Bath).